A 344-amino-acid polypeptide reads, in one-letter code: Melanocyte-stimulating hormone receptor (344 aa).

The Extracellular portion of the chain corresponds to 1-37 (MPMQGAQRKLLGSLNSTPTATSNPGLAANHTGAPCLE). Asn-29 carries N-linked (GlcNAc...) asparagine glycosylation. A helical membrane pass occupies residues 38-63 (VSIPDGLFLSLGLVSLVENVLVVAAI). At 64–72 (AKNRNLHSS) the chain is on the cytoplasmic side. A helical transmembrane segment spans residues 73–93 (MYXFICCLALSDLLVSGSNML). Residues 94–118 (ETAIILLLEAGTLATRASVVQQLHN) are Extracellular-facing. A helical membrane pass occupies residues 119 to 140 (TIDVLTCSSMLCSLCFLGAIAV). At 141–163 (DRYISIFYALRYHSIMTLPRAQR) the chain is on the cytoplasmic side. The chain crosses the membrane as a helical span at residues 164–183 (AIAAIWVASVLSSTLFITYY). At 184–191 (DHAAVLLC) the chain is on the extracellular side. Residues 192-211 (LVVFFLAMLVLMAVLYVHML) traverse the membrane as a helical segment. Residues 212–240 (ARACQHAQGIIRLHNRQLPAHKGFGLRGA) lie on the Cytoplasmic side of the membrane. The chain crosses the membrane as a helical span at residues 241–266 (ATLTILLGIFFLCWGPFFLHLTLVVF). The Extracellular segment spans residues 267–279 (CPQHLTCNCIFKN). A helical transmembrane segment spans residues 280 to 300 (FKVFLTLIICNTIIDPLIYAF). At 301 to 344 (RSQELRRTLKEVLLCSSWPGCWAEGGGDSVWPGSCVTLRGPLPP) the chain is on the cytoplasmic side. Cys-315 carries S-palmitoyl cysteine lipidation.

Belongs to the G-protein coupled receptor 1 family. Interacts with MGRN1, but does not undergo MGRN1-mediated ubiquitination; this interaction competes with GNAS-binding and thus inhibits agonist-induced cAMP production. Interacts with OPN3; the interaction results in a decrease in MC1R-mediated cAMP signaling and ultimately a decrease in melanin production in melanocytes.

It is found in the cell membrane. Functionally, receptor for MSH (alpha, beta and gamma) and ACTH. The activity of this receptor is mediated by G proteins which activate adenylate cyclase. Mediates melanogenesis, the production of eumelanin (black/brown) and phaeomelanin (red/yellow), via regulation of cAMP signaling in melanocytes. This Callithrix geoffroyi (Geoffroy's marmoset) protein is Melanocyte-stimulating hormone receptor (MC1R).